The primary structure comprises 102 residues: MYAIIVTGGKQYKVEAGQAVYVEKLNVEAGEKVTFDQVVFVGGDTPKIGTPTVAGATVTGTVEKQGLEKKVVTFKYKAKKGQHTKKGHRQPYTKVVVDAINA.

It belongs to the bacterial ribosomal protein bL21 family. As to quaternary structure, part of the 50S ribosomal subunit. Contacts protein L20.

In terms of biological role, this protein binds to 23S rRNA in the presence of protein L20. This Levilactobacillus brevis (strain ATCC 367 / BCRC 12310 / CIP 105137 / JCM 1170 / LMG 11437 / NCIMB 947 / NCTC 947) (Lactobacillus brevis) protein is Large ribosomal subunit protein bL21.